A 263-amino-acid polypeptide reads, in one-letter code: Ribosomal RNA small subunit methyltransferase A (263 aa).

Positions 20, 22, 47, 68, 90, and 111 each coordinate S-adenosyl-L-methionine.

Belongs to the class I-like SAM-binding methyltransferase superfamily. rRNA adenine N(6)-methyltransferase family. RsmA subfamily.

It localises to the cytoplasm. It catalyses the reaction adenosine(1518)/adenosine(1519) in 16S rRNA + 4 S-adenosyl-L-methionine = N(6)-dimethyladenosine(1518)/N(6)-dimethyladenosine(1519) in 16S rRNA + 4 S-adenosyl-L-homocysteine + 4 H(+). In terms of biological role, specifically dimethylates two adjacent adenosines (A1518 and A1519) in the loop of a conserved hairpin near the 3'-end of 16S rRNA in the 30S particle. May play a critical role in biogenesis of 30S subunits. The chain is Ribosomal RNA small subunit methyltransferase A from Chlorobium chlorochromatii (strain CaD3).